The chain runs to 552 residues: Segmentation polarity homeobox protein engrailed (552 aa).

Residues 93–108 are compositionally biased toward low complexity; it reads SGSGSPASCSTPASST. Disordered regions lie at residues 93 to 112, 130 to 171, 309 to 419, and 433 to 460; these read SGSGSPASCSTPASSTPLTI, THTT…TAKP, PAAP…GGKN, and DRPSSGPRYRRPKQPKDKTNDEKRPRTA. The span at 135–151 shows a compositional bias: acidic residues; it reads EEEEAEEDDDIDVDVDD. Residues 317–382 show a composition bias toward low complexity; the sequence is PPLSSSASSL…SGSGVNASSP (66 aa). A compositionally biased stretch (basic and acidic residues) spans 446–457; that stretch reads QPKDKTNDEKRP. Positions 454 to 513 form a DNA-binding region, homeobox; the sequence is EKRPRTAFSSEQLARLKREFNENRYLTERRRQQLSSELGLNEAQIKIWFQNKRAKIKKST.

The protein belongs to the engrailed homeobox family. Phosphorylated. Phosphorylation may directly or allosterically modify its function.

It localises to the nucleus. This protein specifies the body segmentation pattern. It is required for the development of the central nervous system. Transcriptional regulator that represses activated promoters. Wg signaling operates by inactivating the SGG repression of EN autoactivation. The protein is Segmentation polarity homeobox protein engrailed (en) of Drosophila melanogaster (Fruit fly).